The sequence spans 207 residues: Ribosomal RNA small subunit methyltransferase G (207 aa).

S-adenosyl-L-methionine-binding positions include glycine 73, leucine 78, 124-125, and arginine 139; that span reads VE.

It belongs to the methyltransferase superfamily. RNA methyltransferase RsmG family.

The protein localises to the cytoplasm. The enzyme catalyses guanosine(527) in 16S rRNA + S-adenosyl-L-methionine = N(7)-methylguanosine(527) in 16S rRNA + S-adenosyl-L-homocysteine. Functionally, specifically methylates the N7 position of guanine in position 527 of 16S rRNA. In Klebsiella pneumoniae subsp. pneumoniae (strain ATCC 700721 / MGH 78578), this protein is Ribosomal RNA small subunit methyltransferase G.